The sequence spans 658 residues: Threonine--tRNA ligase (658 aa).

The TGS domain occupies 1–61; it reads MSDVRVIIQR…RDGESVEPVE (61 aa). Positions 259–554 are catalytic; sequence DHRKLGNELD…LLEHYAGAFP (296 aa). The Zn(2+) site is built by C353, H404, and H531.

The protein belongs to the class-II aminoacyl-tRNA synthetase family. As to quaternary structure, homodimer. Zn(2+) serves as cofactor.

The protein resides in the cytoplasm. It catalyses the reaction tRNA(Thr) + L-threonine + ATP = L-threonyl-tRNA(Thr) + AMP + diphosphate + H(+). Functionally, catalyzes the attachment of threonine to tRNA(Thr) in a two-step reaction: L-threonine is first activated by ATP to form Thr-AMP and then transferred to the acceptor end of tRNA(Thr). Also edits incorrectly charged L-seryl-tRNA(Thr). The protein is Threonine--tRNA ligase of Streptomyces griseus subsp. griseus (strain JCM 4626 / CBS 651.72 / NBRC 13350 / KCC S-0626 / ISP 5235).